We begin with the raw amino-acid sequence, 243 residues long: Ribonuclease PH (243 aa).

Residues R84 and 122–124 (GTR) each bind phosphate.

This sequence belongs to the RNase PH family. Homohexameric ring arranged as a trimer of dimers.

The enzyme catalyses tRNA(n+1) + phosphate = tRNA(n) + a ribonucleoside 5'-diphosphate. Phosphorolytic 3'-5' exoribonuclease that plays an important role in tRNA 3'-end maturation. Removes nucleotide residues following the 3'-CCA terminus of tRNAs; can also add nucleotides to the ends of RNA molecules by using nucleoside diphosphates as substrates, but this may not be physiologically important. Probably plays a role in initiation of 16S rRNA degradation (leading to ribosome degradation) during starvation. The protein is Ribonuclease PH of Bdellovibrio bacteriovorus (strain ATCC 15356 / DSM 50701 / NCIMB 9529 / HD100).